We begin with the raw amino-acid sequence, 225 residues long: Riboflavin kinase (225 aa).

Residues 1–89 (MPDIEYLKKL…SRIFSSEPDT (89 aa)) are unknown. The riboflavin kinase stretch occupies residues 90 to 225 (LELEGNVLKG…LKKQGMEGQK (136 aa)). 99–104 (GLGEGQ) contributes to the CDP binding site. Mg(2+) is bound by residues Thr-128 and Asn-130. FMN-binding residues include Thr-185 and Glu-193. 198–201 (VKLR) contributes to the CDP binding site.

The protein belongs to the archaeal riboflavin kinase family. Requires Mg(2+) as cofactor.

The catalysed reaction is riboflavin + CTP = CDP + FMN + H(+). Its pathway is cofactor biosynthesis; FMN biosynthesis; FMN from riboflavin (CTP route): step 1/1. In terms of biological role, catalyzes the CTP-dependent phosphorylation of riboflavin (vitamin B2) to form flavin mononucleotide (FMN). This chain is Riboflavin kinase (ribK), found in Methanosarcina mazei (strain ATCC BAA-159 / DSM 3647 / Goe1 / Go1 / JCM 11833 / OCM 88) (Methanosarcina frisia).